We begin with the raw amino-acid sequence, 419 residues long: Tol-Pal system protein TolB (419 aa).

Residues 1–19 form the signal peptide; sequence MFNRIISLFLLLFTGQVIA.

The protein belongs to the TolB family. As to quaternary structure, the Tol-Pal system is composed of five core proteins: the inner membrane proteins TolA, TolQ and TolR, the periplasmic protein TolB and the outer membrane protein Pal. They form a network linking the inner and outer membranes and the peptidoglycan layer.

The protein localises to the periplasm. In terms of biological role, part of the Tol-Pal system, which plays a role in outer membrane invagination during cell division and is important for maintaining outer membrane integrity. The protein is Tol-Pal system protein TolB of Legionella pneumophila subsp. pneumophila (strain Philadelphia 1 / ATCC 33152 / DSM 7513).